The sequence spans 165 residues: ATP synthase subunit b (165 aa).

A helical membrane pass occupies residues 11–31 (LIFWTIVNFLLLVFLLGKFAW).

The protein belongs to the ATPase B chain family. In terms of assembly, F-type ATPases have 2 components, F(1) - the catalytic core - and F(0) - the membrane proton channel. F(1) has five subunits: alpha(3), beta(3), gamma(1), delta(1), epsilon(1). F(0) has three main subunits: a(1), b(2) and c(10-14). The alpha and beta chains form an alternating ring which encloses part of the gamma chain. F(1) is attached to F(0) by a central stalk formed by the gamma and epsilon chains, while a peripheral stalk is formed by the delta and b chains.

The protein localises to the cell membrane. In terms of biological role, f(1)F(0) ATP synthase produces ATP from ADP in the presence of a proton or sodium gradient. F-type ATPases consist of two structural domains, F(1) containing the extramembraneous catalytic core and F(0) containing the membrane proton channel, linked together by a central stalk and a peripheral stalk. During catalysis, ATP synthesis in the catalytic domain of F(1) is coupled via a rotary mechanism of the central stalk subunits to proton translocation. Its function is as follows. Component of the F(0) channel, it forms part of the peripheral stalk, linking F(1) to F(0). This Elusimicrobium minutum (strain Pei191) protein is ATP synthase subunit b.